We begin with the raw amino-acid sequence, 89 residues long: Small ribosomal subunit protein uS14 (89 aa).

The protein belongs to the universal ribosomal protein uS14 family. As to quaternary structure, part of the 30S ribosomal subunit. Contacts proteins S3 and S10.

Binds 16S rRNA, required for the assembly of 30S particles and may also be responsible for determining the conformation of the 16S rRNA at the A site. The sequence is that of Small ribosomal subunit protein uS14 from Azobacteroides pseudotrichonymphae genomovar. CFP2.